The following is a 623-amino-acid chain: Frizzled and smoothened-like protein M (623 aa).

Residues 1–18 form the signal peptide; that stretch reads MKSIFIIIFILYVFQVNS. The Extracellular segment spans residues 19-243; sequence QTIYPIDPSG…WDQLYNLSNT (225 aa). One can recognise an FZ domain in the interval 25–163; sequence DPSGKCEQYI…NYSEFNLTNY (139 aa). Cystine bridges form between C30/C100 and C42/C93. N57, N106, N109, N154, N159, N169, N199, and N239 each carry an N-linked (GlcNAc...) asparagine glycan. Residues 244-264 form a helical membrane-spanning segment; it reads LAVLSTFGSLYLLVTFIILNP. Topologically, residues 265-273 are cytoplasmic; the sequence is KVTSFDRMY. Residues 274–294 traverse the membrane as a helical segment; sequence GFFNGSVFMMSLSGVILFIAG. Residues 295 to 317 lie on the Extracellular side of the membrane; that stretch reads GPRALIKDGGARISVFEDPLCSS. The chain crosses the membrane as a helical span at residues 318–338; that stretch reads TGFIFQLFAINAILFWAYMGF. The Cytoplasmic portion of the chain corresponds to 339-354; it reads DLWWRVKYITKPLNIQ. The helical transmembrane segment at 355–375 threads the bilayer; the sequence is KYYVPIAFTISFIFSVIPLAT. Residues 376–397 lie on the Extracellular side of the membrane; the sequence is KNYRMVRGNIHCWVHKAVLQNT. Residues 398-418 form a helical membrane-spanning segment; the sequence is LFFGPLGLTLTISTGFIGLVI. Over 419–439 the chain is Cytoplasmic; it reads YEIYKIVKATGRGGIMKLEIK. The chain crosses the membrane as a helical span at residues 440-460; sequence PILNIVLIYFSFVYIFAFNFH. At 461–494 the chain is on the extracellular side; that stretch reads NDNNSKNTYGSIDEFFQCTLESDDPSKCTVGGPS. N463 carries an N-linked (GlcNAc...) asparagine glycan. The helical transmembrane segment at 495 to 515 threads the bilayer; it reads IGSLGYFIYCIRIYGIYCFFL. The Cytoplasmic portion of the chain corresponds to 516–623; the sequence is QGLNERAFKI…DIEIGSVNIK (108 aa). Residues 552–590 are disordered; sequence PSESGNSSTTAGTSTTINNSNINKKNNNSKPTLSTMDSN. Positions 555–580 are enriched in low complexity; that stretch reads SGNSSTTAGTSTTINNSNINKKNNNS.

This sequence belongs to the G-protein coupled receptor Fz/Smo family.

The protein resides in the membrane. The sequence is that of Frizzled and smoothened-like protein M (fslM-1) from Dictyostelium discoideum (Social amoeba).